A 428-amino-acid chain; its full sequence is GTPase Obg (428 aa).

Residues Met-1 to Leu-158 form the Obg domain. Positions Ala-159–Glu-329 constitute an OBG-type G domain. GTP contacts are provided by residues Gly-165–Ser-172, Phe-190–Val-194, Asp-212–Gly-215, Asn-282–Asp-285, and Ser-310–Val-312. Mg(2+)-binding residues include Ser-172 and Thr-192. Positions Lys-350–Asp-428 constitute an OCT domain.

This sequence belongs to the TRAFAC class OBG-HflX-like GTPase superfamily. OBG GTPase family. As to quaternary structure, monomer. Mg(2+) is required as a cofactor.

It localises to the cytoplasm. An essential GTPase which binds GTP, GDP and possibly (p)ppGpp with moderate affinity, with high nucleotide exchange rates and a fairly low GTP hydrolysis rate. Plays a role in control of the cell cycle, stress response, ribosome biogenesis and in those bacteria that undergo differentiation, in morphogenesis control. The protein is GTPase Obg of Bacillus thuringiensis (strain Al Hakam).